Here is a 583-residue protein sequence, read N- to C-terminus: 2-succinyl-5-enolpyruvyl-6-hydroxy-3-cyclohexene-1-carboxylate synthase (583 aa).

Belongs to the TPP enzyme family. MenD subfamily. Homodimer. Mg(2+) serves as cofactor. It depends on Mn(2+) as a cofactor. Thiamine diphosphate is required as a cofactor.

The enzyme catalyses isochorismate + 2-oxoglutarate + H(+) = 5-enolpyruvoyl-6-hydroxy-2-succinyl-cyclohex-3-ene-1-carboxylate + CO2. It functions in the pathway quinol/quinone metabolism; 1,4-dihydroxy-2-naphthoate biosynthesis; 1,4-dihydroxy-2-naphthoate from chorismate: step 2/7. The protein operates within quinol/quinone metabolism; menaquinone biosynthesis. Its function is as follows. Catalyzes the thiamine diphosphate-dependent decarboxylation of 2-oxoglutarate and the subsequent addition of the resulting succinic semialdehyde-thiamine pyrophosphate anion to isochorismate to yield 2-succinyl-5-enolpyruvyl-6-hydroxy-3-cyclohexene-1-carboxylate (SEPHCHC). The polypeptide is 2-succinyl-5-enolpyruvyl-6-hydroxy-3-cyclohexene-1-carboxylate synthase (Chlorobium luteolum (strain DSM 273 / BCRC 81028 / 2530) (Pelodictyon luteolum)).